We begin with the raw amino-acid sequence, 572 residues long: Sulfite reductase [NADPH] hemoprotein beta-component (572 aa).

[4Fe-4S] cluster contacts are provided by C437, C443, C482, and C486. C486 is a siroheme binding site.

It belongs to the nitrite and sulfite reductase 4Fe-4S domain family. As to quaternary structure, alpha(8)-beta(8). The alpha component is a flavoprotein, the beta component is a hemoprotein. It depends on siroheme as a cofactor. [4Fe-4S] cluster is required as a cofactor.

It carries out the reaction hydrogen sulfide + 3 NADP(+) + 3 H2O = sulfite + 3 NADPH + 4 H(+). It functions in the pathway sulfur metabolism; hydrogen sulfide biosynthesis; hydrogen sulfide from sulfite (NADPH route): step 1/1. Component of the sulfite reductase complex that catalyzes the 6-electron reduction of sulfite to sulfide. This is one of several activities required for the biosynthesis of L-cysteine from sulfate. The polypeptide is Sulfite reductase [NADPH] hemoprotein beta-component (Staphylococcus epidermidis (strain ATCC 12228 / FDA PCI 1200)).